The chain runs to 305 residues: Oxygen-dependent coproporphyrinogen-III oxidase (305 aa).

S93 lines the substrate pocket. H97 and H107 together coordinate a divalent metal cation. H107 functions as the Proton donor in the catalytic mechanism. A substrate-binding site is contributed by N109–R111. Residues H146 and H176 each contribute to the a divalent metal cation site. The interval Y241 to G276 is important for dimerization. G259–R261 contributes to the substrate binding site.

It belongs to the aerobic coproporphyrinogen-III oxidase family. In terms of assembly, homodimer. The cofactor is a divalent metal cation.

The protein resides in the cytoplasm. The catalysed reaction is coproporphyrinogen III + O2 + 2 H(+) = protoporphyrinogen IX + 2 CO2 + 2 H2O. Its pathway is porphyrin-containing compound metabolism; protoporphyrin-IX biosynthesis; protoporphyrinogen-IX from coproporphyrinogen-III (O2 route): step 1/1. Its function is as follows. Involved in the heme biosynthesis. Catalyzes the aerobic oxidative decarboxylation of propionate groups of rings A and B of coproporphyrinogen-III to yield the vinyl groups in protoporphyrinogen-IX. This Pseudomonas aeruginosa (strain UCBPP-PA14) protein is Oxygen-dependent coproporphyrinogen-III oxidase.